A 376-amino-acid polypeptide reads, in one-letter code: Chaperone protein DnaJ (376 aa).

The region spanning aspartate 5 to glycine 70 is the J domain. A CR-type zinc finger spans residues glycine 132 to serine 210. Zn(2+) contacts are provided by cysteine 145, cysteine 148, cysteine 162, cysteine 165, cysteine 184, cysteine 187, cysteine 198, and cysteine 201. 4 CXXCXGXG motif repeats span residues cysteine 145–glycine 152, cysteine 162–glycine 169, cysteine 184–glycine 191, and cysteine 198–glycine 205.

Belongs to the DnaJ family. In terms of assembly, homodimer. The cofactor is Zn(2+).

Its subcellular location is the cytoplasm. Functionally, participates actively in the response to hyperosmotic and heat shock by preventing the aggregation of stress-denatured proteins and by disaggregating proteins, also in an autonomous, DnaK-independent fashion. Unfolded proteins bind initially to DnaJ; upon interaction with the DnaJ-bound protein, DnaK hydrolyzes its bound ATP, resulting in the formation of a stable complex. GrpE releases ADP from DnaK; ATP binding to DnaK triggers the release of the substrate protein, thus completing the reaction cycle. Several rounds of ATP-dependent interactions between DnaJ, DnaK and GrpE are required for fully efficient folding. Also involved, together with DnaK and GrpE, in the DNA replication of plasmids through activation of initiation proteins. The protein is Chaperone protein DnaJ of Shewanella piezotolerans (strain WP3 / JCM 13877).